A 345-amino-acid polypeptide reads, in one-letter code: MTDKTSLSYKDAGVDIDAGNALVGRIKGVVKKTRRPEVMGGLGGFGALCALPQKYREPVLVSGTDGVGTKLRLAMDLKRHDTIGIDLVAMCVNDLVVQGAEPLFFLDYYATGKLDVDTASAVISGIAEGCLQSGCSLVGGETAEMPGMYHGEDYDVAGFCVGVVEKSEIIDGSKVSDGDVLIALGSSGPHSNGYSLVRKILEVSGCDPQTTELDGKPLADHLLAPTRIYVKSVLELIEKVDVNAIAHLTGGGFWENIPRVLPDNTQAVIDESSWQWPEVFNWLQTAGNVERHEMYRTFNCGVGMIIALPAPEVDKALALLNANGENAWKIGIIKASDSEQRVVIE.

This sequence belongs to the AIR synthase family. As to quaternary structure, homodimer.

Its subcellular location is the cytoplasm. The enzyme catalyses 2-formamido-N(1)-(5-O-phospho-beta-D-ribosyl)acetamidine + ATP = 5-amino-1-(5-phospho-beta-D-ribosyl)imidazole + ADP + phosphate + H(+). The protein operates within purine metabolism; IMP biosynthesis via de novo pathway; 5-amino-1-(5-phospho-D-ribosyl)imidazole from N(2)-formyl-N(1)-(5-phospho-D-ribosyl)glycinamide: step 2/2. This is Phosphoribosylformylglycinamidine cyclo-ligase from Escherichia coli O157:H7.